The chain runs to 74 residues: Consomatin Ma1 (74 aa).

The first 22 residues, 1–22 (MQTAYWVMVMMMVWITAPLSEG), serve as a signal peptide directing secretion. A propeptide spanning residues 23–57 (GKLNGEIRGLVSHILIPQHTLRSLTSRDRSDNGGS) is cleaved from the precursor. C63 and C68 are disulfide-bonded. W65 carries the post-translational modification D-tryptophan. A 4-hydroxyproline mark is found at P69, P70, and P72.

This sequence belongs to the conotoxin C superfamily. Consomatin family. Expressed by the venom duct.

It localises to the secreted. Its function is as follows. Moderately activates human somatostatin receptors (SSTR) with a preferential activation of SSTR1 and SSTR4. In vivo, does not cause behavioral changes in mice within a few minutes of intracranial injection, but causes a progressive loss of movement thereafter. Four to five hours after injection, mice recover, even with the highest dose tested. Shows antinociception and antihyperalgesia activities in two mouse models of acute pain, most probably by acting outside the central nervous system. This Conus magus (Magical cone) protein is Consomatin Ma1.